A 481-amino-acid chain; its full sequence is Small ribosomal subunit protein bS1 (481 aa).

S1 motif domains follow at residues 36-105, 123-188, 209-277, and 294-363; these read GDIV…LSKK, DEAV…LSRR, GTIR…LSLK, and GQIV…LSLK. A disordered region spans residues 429-467; the sequence is TAQMEKFAAAEAAGRGADDQSSASSAPSEKTAGGSLASD. Residues 437–456 show a composition bias toward low complexity; that stretch reads AAEAAGRGADDQSSASSAPS.

This sequence belongs to the bacterial ribosomal protein bS1 family.

Binds mRNA; thus facilitating recognition of the initiation point. It is needed to translate mRNA with a short Shine-Dalgarno (SD) purine-rich sequence. This is Small ribosomal subunit protein bS1 (rpsA) from Mycobacterium tuberculosis (strain CDC 1551 / Oshkosh).